A 573-amino-acid polypeptide reads, in one-letter code: FAD-dependent monooxygenase resA (573 aa).

An N-terminal signal peptide occupies residues 1–17 (MYDVIVIGAGWCGLVAA). Isoleucine 106 is a binding site for FAD. Residue asparagine 235 is glycosylated (N-linked (GlcNAc...) asparagine).

The protein belongs to the FAD-binding monooxygenase family. It depends on FAD as a cofactor.

The protein operates within antifungal biosynthesis. Its function is as follows. FAD-dependent monooxygenase; part of the gene cluster that mediates the biosynthesis of the tetrahydropyranyl antifungal agent restricticin that acts as an inhibitor of CYP51 and blocks the ergosterol biosynthesis. The highly reducing polyketide synthase resH, the short chain dehydrogenase resG, the cyclase resF, the FAD-dependent monooxygenase resA and the enoylreductase resD are required to generate the first stable intermediate desmethylrestrictinol. ResH with resD biosynthesize the first polyketide chain intermediate that is reduced by resG, followed by epoxidation by resA before 6-endo cyclization via epoxide opening by resF leads to desmethylrestrictinol. The methyltransferase resE then catalyzes the C4 O-methylation of desmethylrestrictinol to produce restrictinol, and the nonribosomal peptide synthetase resC catalyzes the C3 esterification of restrictinol with glycine that leads to restricticin. The protein is FAD-dependent monooxygenase resA of Aspergillus sclerotiorum.